A 357-amino-acid chain; its full sequence is Ribosomal RNA large subunit methyltransferase M (357 aa).

S-adenosyl-L-methionine is bound by residues Ser183, 216–219 (APGG), Asp235, Asp255, and Asp271. Lys300 acts as the Proton acceptor in catalysis.

It belongs to the class I-like SAM-binding methyltransferase superfamily. RNA methyltransferase RlmE family. RlmM subfamily. As to quaternary structure, monomer.

The protein resides in the cytoplasm. The enzyme catalyses cytidine(2498) in 23S rRNA + S-adenosyl-L-methionine = 2'-O-methylcytidine(2498) in 23S rRNA + S-adenosyl-L-homocysteine + H(+). Catalyzes the 2'-O-methylation at nucleotide C2498 in 23S rRNA. The polypeptide is Ribosomal RNA large subunit methyltransferase M (Pseudomonas fluorescens (strain Pf0-1)).